The sequence spans 713 residues: Phosphoribosylformylglycinamidine synthase subunit PurL (713 aa).

Residues 1 to 17 are compositionally biased toward basic and acidic residues; the sequence is MSLSPSDRELVTEELGR. A disordered region spans residues 1-20; it reads MSLSPSDRELVTEELGREPT. H34 is an active-site residue. Residue Y37 participates in ATP binding. E85 contacts Mg(2+). Residues 86–89 and R108 each bind substrate; that span reads SHNH. Catalysis depends on H87, which acts as the Proton acceptor. Position 109 (D109) interacts with Mg(2+). Position 233 (Q233) interacts with substrate. Position 261 (D261) interacts with Mg(2+). 305 to 307 provides a ligand contact to substrate; the sequence is ESQ. Residues D480 and G517 each contribute to the ATP site. N518 lines the Mg(2+) pocket. S520 contacts substrate.

It belongs to the FGAMS family. Monomer. Part of the FGAM synthase complex composed of 1 PurL, 1 PurQ and 2 PurS subunits.

It is found in the cytoplasm. It carries out the reaction N(2)-formyl-N(1)-(5-phospho-beta-D-ribosyl)glycinamide + L-glutamine + ATP + H2O = 2-formamido-N(1)-(5-O-phospho-beta-D-ribosyl)acetamidine + L-glutamate + ADP + phosphate + H(+). It participates in purine metabolism; IMP biosynthesis via de novo pathway; 5-amino-1-(5-phospho-D-ribosyl)imidazole from N(2)-formyl-N(1)-(5-phospho-D-ribosyl)glycinamide: step 1/2. Functionally, part of the phosphoribosylformylglycinamidine synthase complex involved in the purines biosynthetic pathway. Catalyzes the ATP-dependent conversion of formylglycinamide ribonucleotide (FGAR) and glutamine to yield formylglycinamidine ribonucleotide (FGAM) and glutamate. The FGAM synthase complex is composed of three subunits. PurQ produces an ammonia molecule by converting glutamine to glutamate. PurL transfers the ammonia molecule to FGAR to form FGAM in an ATP-dependent manner. PurS interacts with PurQ and PurL and is thought to assist in the transfer of the ammonia molecule from PurQ to PurL. In Natronomonas pharaonis (strain ATCC 35678 / DSM 2160 / CIP 103997 / JCM 8858 / NBRC 14720 / NCIMB 2260 / Gabara) (Halobacterium pharaonis), this protein is Phosphoribosylformylglycinamidine synthase subunit PurL.